A 110-amino-acid polypeptide reads, in one-letter code: Insulin (110 aa).

Residues Met1 to Ala24 form the signal peptide. Disulfide bonds link Cys31-Cys96, Cys43-Cys109, and Cys95-Cys100. Positions Glu57–Gln87 are cleaved as a propeptide — c peptide. Residues Asp60–Ser80 form a disordered region.

Belongs to the insulin family. In terms of assembly, heterodimer of a B chain and an A chain linked by two disulfide bonds.

The protein localises to the secreted. In terms of biological role, insulin decreases blood glucose concentration. It increases cell permeability to monosaccharides, amino acids and fatty acids. It accelerates glycolysis, the pentose phosphate cycle, and glycogen synthesis in liver. The chain is Insulin (INS) from Felis catus (Cat).